The sequence spans 138 residues: Basic phospholipase A2 Mtx-b (138 aa).

A signal peptide spans 1–16 (MRALWIVAVLLVGVEG). Intrachain disulfides connect cysteine 42–cysteine 131, cysteine 44–cysteine 60, cysteine 59–cysteine 111, cysteine 65–cysteine 138, cysteine 66–cysteine 104, cysteine 73–cysteine 97, and cysteine 91–cysteine 102. The Ca(2+) site is built by tyrosine 43, glycine 45, and glycine 47. The active site involves histidine 63. Aspartate 64 lines the Ca(2+) pocket. Aspartate 105 is an active-site residue.

Heterodimer of an acidic subunit and a basic chain. The acidic subunit is non-toxic, without enzymatic activity and comprises 3 peptides that are cross-linked by 7 disulfide bridges. The basic subunit is toxic, has phospholipase A2 activity and is composed of a single chain. Ca(2+) serves as cofactor. Expressed by the venom gland.

The protein resides in the secreted. It catalyses the reaction a 1,2-diacyl-sn-glycero-3-phosphocholine + H2O = a 1-acyl-sn-glycero-3-phosphocholine + a fatty acid + H(+). Functionally, snake venom phospholipase A2 (PLA2) that inhibits neuromuscular transmission by blocking acetylcholine release from the nerve termini. PLA2 catalyzes the calcium-dependent hydrolysis of the 2-acyl groups in 3-sn-phosphoglycerides. This is Basic phospholipase A2 Mtx-b from Crotalus scutulatus scutulatus (Mojave rattlesnake).